A 260-amino-acid polypeptide reads, in one-letter code: MKILVTNDDGPFSPGLAILREAVRGLGEATVVVPETPKSATGLGLTLHKPLRVNRLSLDGEPVYLVSGTPSDVIYIAMNVISGKPDLVVSGVNIGDNLSVQVILTSGTLGAVLQASIEGVPGIAFSAAVDTPEELEEGEYRNFVLRSTKAIVRAVVGEGFPKGVDALNVNFPSVIASDVVVVRPALKRFSTAVVRRKDPQGRPYYWLYGHPVEAEEGSDVHAVLEEGKIAITPLSLSGMLSYSPEALSGIVKKVKEELSR.

A divalent metal cation contacts are provided by aspartate 8, aspartate 9, serine 39, and asparagine 93.

This sequence belongs to the SurE nucleotidase family. Requires a divalent metal cation as cofactor.

It is found in the cytoplasm. It catalyses the reaction a ribonucleoside 5'-phosphate + H2O = a ribonucleoside + phosphate. Its function is as follows. Nucleotidase that shows phosphatase activity on nucleoside 5'-monophosphates. The polypeptide is 5'-nucleotidase SurE (Thermofilum pendens (strain DSM 2475 / Hrk 5)).